Here is a 501-residue protein sequence, read N- to C-terminus: Carotenoid cleavage oxygenase (501 aa).

The Fe cation site is built by His162, His211, His314, and His494.

Belongs to the carotenoid oxygenase family. It depends on Fe(2+) as a cofactor.

In terms of biological role, catalyzes the oxidative cleavage of several carotenoids and apocarotenoids in vitro. This is Carotenoid cleavage oxygenase from Mycobacterium tuberculosis (strain CDC 1551 / Oshkosh).